Reading from the N-terminus, the 498-residue chain is ATP synthase subunit beta, chloroplastic (498 aa).

172-179 (GGAGVGKT) provides a ligand contact to ATP.

The protein belongs to the ATPase alpha/beta chains family. F-type ATPases have 2 components, CF(1) - the catalytic core - and CF(0) - the membrane proton channel. CF(1) has five subunits: alpha(3), beta(3), gamma(1), delta(1), epsilon(1). CF(0) has four main subunits: a(1), b(1), b'(1) and c(9-12).

It is found in the plastid. The protein resides in the chloroplast thylakoid membrane. It carries out the reaction ATP + H2O + 4 H(+)(in) = ADP + phosphate + 5 H(+)(out). Its function is as follows. Produces ATP from ADP in the presence of a proton gradient across the membrane. The catalytic sites are hosted primarily by the beta subunits. The sequence is that of ATP synthase subunit beta, chloroplastic from Nicotiana tomentosiformis (Tobacco).